A 196-amino-acid chain; its full sequence is Imidazoleglycerol-phosphate dehydratase (196 aa).

This sequence belongs to the imidazoleglycerol-phosphate dehydratase family.

It localises to the cytoplasm. The enzyme catalyses D-erythro-1-(imidazol-4-yl)glycerol 3-phosphate = 3-(imidazol-4-yl)-2-oxopropyl phosphate + H2O. It functions in the pathway amino-acid biosynthesis; L-histidine biosynthesis; L-histidine from 5-phospho-alpha-D-ribose 1-diphosphate: step 6/9. This chain is Imidazoleglycerol-phosphate dehydratase, found in Desulforudis audaxviator (strain MP104C).